The primary structure comprises 147 residues: Deoxyuridine 5'-triphosphate nucleotidohydrolase (147 aa).

Substrate contacts are provided by residues 68-70 (RSG), Asn81, and 85-87 (TID).

This sequence belongs to the dUTPase family. Mg(2+) serves as cofactor.

It carries out the reaction dUTP + H2O = dUMP + diphosphate + H(+). The protein operates within pyrimidine metabolism; dUMP biosynthesis; dUMP from dCTP (dUTP route): step 2/2. This enzyme is involved in nucleotide metabolism: it produces dUMP, the immediate precursor of thymidine nucleotides and it decreases the intracellular concentration of dUTP so that uracil cannot be incorporated into DNA. The polypeptide is Deoxyuridine 5'-triphosphate nucleotidohydrolase (Solibacter usitatus (strain Ellin6076)).